A 457-amino-acid polypeptide reads, in one-letter code: PDZ and LIM domain protein 7 (457 aa).

The 85-residue stretch at 1-85 (MDSFKVVLEG…RLSLGLSRAQ (85 aa)) folds into the PDZ domain. Ser78 bears the Phosphoserine mark. 2 disordered regions span residues 81-132 (LSRA…LSQN) and 186-226 (FMKK…PWAV). A Phosphothreonine modification is found at Thr96. Arg103 carries the asymmetric dimethylarginine modification. Ser111 carries the phosphoserine modification. Ser247 bears the Phosphoserine mark. LIM zinc-binding domains are found at residues 280–338 (PVCH…VRYA), 339–398 (PSCA…MFGT), and 399–457 (KCRG…FSHV).

As to quaternary structure, binds via its LIM zinc-binding 3 domain (LIM 3) domain to endocytic codes of INSR, but not with those of IGF1R, LDLR, TFRC, or EGFR. Interacts with various PKC isoforms through the LIM zinc-binding domains. Binds to RET in a phosphorylation-independent manner via its LIM zinc-binding 2 domain (LIM 2). Probably part of a complex with SHC and the RET dimer. Interacts with TPM2, TBX4 and TBX5. Interacts (via LIM domains) with SIPA1L1. In terms of tissue distribution, expressed in kidney, heart, brain, lung, and skeletal muscle. Overexpression results in the synthesis of an unidentified soluble factor which acts on cells in the osteoblast lineage causing them to differentiate and secrete BMP-2.

The protein resides in the cytoplasm. The protein localises to the cytoskeleton. May function as a scaffold on which the coordinated assembly of proteins can occur. May play a role as an adapter that, via its PDZ domain, localizes LIM-binding proteins to actin filaments of both skeletal muscle and nonmuscle tissues. Involved in both of the two fundamental mechanisms of bone formation, direct bone formation (e.g. embryonic flat bones mandible and cranium), and endochondral bone formation (e.g. embryonic long bone development). Plays a role during fracture repair. Involved in BMP6 signaling pathway. The polypeptide is PDZ and LIM domain protein 7 (Pdlim7) (Rattus norvegicus (Rat)).